The following is a 453-amino-acid chain: Vitamin D3 receptor A (453 aa).

Residues 53-128 (PRICGVCGDK…IGMMKEFILT (76 aa)) constitute a DNA-binding region (nuclear receptor). Zn(2+) contacts are provided by Cys56, Cys59, Cys73, Cys76, Cys92, Cys98, Cys108, and Cys111. 2 consecutive NR C4-type zinc fingers follow at residues 56–76 (CGVC…CEGC) and 92–111 (CPFN…CQAC). The hinge stretch occupies residues 129–158 (DEEVQRKKDLIMKRKEEEAAREARKPRLSD). An NR LBD domain is found at 159 to 449 (EQMQIINSLV…LTPLVLEVFG (291 aa)). Calcitriol is bound by residues Tyr175 and Ser265. Positions 274 to 292 (KMIPGFRDLTAEDQIALLK) are interaction with coactivator LXXLL motif. Calcitriol is bound by residues Arg302, Ser306, His333, and His423. The short motif at 442–450 (PLVLEVFGS) is the 9aaTAD element.

The protein belongs to the nuclear hormone receptor family. NR1 subfamily. Homodimer in the absence of bound vitamin D3. Heterodimer with RXRA after vitamin D3 binding. Interacts with ncoa1 and possibly other coactivators, leading to a strong increase of transcription of target genes. Detected in embryo 24 to 48 hours after fertilization and in gastrula.

The protein resides in the nucleus. It localises to the cytoplasm. Functionally, nuclear receptor for calcitriol, the active form of vitamin D3 which mediates the action of this vitamin on cells. Enters the nucleus upon vitamin D3 binding where it forms heterodimers with the retinoid X receptor/RXR. The VDR-RXR heterodimers bind to specific response elements on DNA and activate the transcription of vitamin D3-responsive target genes. Recruited to promoters via its interaction with BAZ1B/WSTF which mediates the interaction with acetylated histones, an essential step for VDR-promoter association. Plays a central role in calcium homeostasis. The polypeptide is Vitamin D3 receptor A (vdra) (Danio rerio (Zebrafish)).